We begin with the raw amino-acid sequence, 347 residues long: Phosphoribosylformylglycinamidine cyclo-ligase (347 aa).

It belongs to the AIR synthase family.

Its subcellular location is the cytoplasm. The catalysed reaction is 2-formamido-N(1)-(5-O-phospho-beta-D-ribosyl)acetamidine + ATP = 5-amino-1-(5-phospho-beta-D-ribosyl)imidazole + ADP + phosphate + H(+). The protein operates within purine metabolism; IMP biosynthesis via de novo pathway; 5-amino-1-(5-phospho-D-ribosyl)imidazole from N(2)-formyl-N(1)-(5-phospho-D-ribosyl)glycinamide: step 2/2. In Alkalilimnicola ehrlichii (strain ATCC BAA-1101 / DSM 17681 / MLHE-1), this protein is Phosphoribosylformylglycinamidine cyclo-ligase.